The sequence spans 424 residues: DNA primase DnaG (424 aa).

The region spanning 171–245 (DDIIVVEGRA…DVDFVARAPP (75 aa)) is the Toprim domain. Positions 177, 219, and 221 each coordinate Mg(2+).

This sequence belongs to the archaeal DnaG primase family. As to quaternary structure, forms a ternary complex with MCM helicase and DNA. It depends on Mg(2+) as a cofactor.

It carries out the reaction ssDNA + n NTP = ssDNA/pppN(pN)n-1 hybrid + (n-1) diphosphate.. Functionally, RNA polymerase that catalyzes the synthesis of short RNA molecules used as primers for DNA polymerase during DNA replication. This Methanocaldococcus jannaschii (strain ATCC 43067 / DSM 2661 / JAL-1 / JCM 10045 / NBRC 100440) (Methanococcus jannaschii) protein is DNA primase DnaG.